The sequence spans 279 residues: F420-dependent methylenetetrahydromethanopterin dehydrogenase (279 aa).

Belongs to the MTD family.

The enzyme catalyses 5,10-methylenetetrahydromethanopterin + oxidized coenzyme F420-(gamma-L-Glu)(n) + 2 H(+) = 5,10-methenyl-5,6,7,8-tetrahydromethanopterin + reduced coenzyme F420-(gamma-L-Glu)(n). Its pathway is one-carbon metabolism; methanogenesis from CO(2); 5,10-methylene-5,6,7,8-tetrahydromethanopterin from 5,10-methenyl-5,6,7,8-tetrahydromethanopterin (coenzyme F420 route): step 1/1. Its function is as follows. Catalyzes the reversible reduction of methenyl-H(4)MPT(+) to methylene-H(4)MPT. In Methanosarcina acetivorans (strain ATCC 35395 / DSM 2834 / JCM 12185 / C2A), this protein is F420-dependent methylenetetrahydromethanopterin dehydrogenase (mtd).